The following is a 142-amino-acid chain: Hemoglobin subunit alpha-I/II (142 aa).

In terms of domain architecture, Globin spans Val2–Arg142. A Phosphoserine modification is found at Ser4. An N6-succinyllysine mark is found at Lys8 and Lys12. The residue at position 17 (Lys17) is an N6-acetyllysine; alternate. Residue Lys17 is modified to N6-succinyllysine; alternate. Residue Tyr25 is modified to Phosphotyrosine. The residue at position 36 (Ser36) is a Phosphoserine. Lys41 is subject to N6-succinyllysine. Residue Ser50 is modified to Phosphoserine. His59 is an O2 binding site. His88 is a binding site for heme b. Residue Ser103 is modified to Phosphoserine. Thr109 bears the Phosphothreonine mark. Ser125 carries the post-translational modification Phosphoserine. A phosphothreonine mark is found at Thr135 and Thr138. Ser139 is modified (phosphoserine).

The protein belongs to the globin family. In terms of assembly, heterotetramer of two alpha chains and two beta chains. As to expression, red blood cells.

Functionally, involved in oxygen transport from the lung to the various peripheral tissues. In Bison bonasus (European bison), this protein is Hemoglobin subunit alpha-I/II.